Consider the following 535-residue polypeptide: Probable fucosyltransferase 4 (535 aa).

Over 1–20 the chain is Cytoplasmic; it reads MYHIFQISGEVIKGLGLKTK. Residues 21-41 form a helical; Signal-anchor for type II membrane protein membrane-spanning segment; that stretch reads ILITIVFSTLLILSVMLLSFS. At 42 to 535 the chain is on the lumenal side; the sequence is NNFNNKLFAA…IWGLKLFDEL (494 aa). 5 N-linked (GlcNAc...) asparagine glycosylation sites follow: Asn136, Asn226, Asn230, Asn377, and Asn409.

Belongs to the glycosyltransferase 37 family. In terms of tissue distribution, expressed in roots, stems, leaves, flowers, siliques and seedlings.

It localises to the golgi apparatus. The protein localises to the golgi stack membrane. It functions in the pathway protein modification; protein glycosylation. Its function is as follows. May be involved in cell wall biosynthesis. May act as a fucosyltransferase. This is Probable fucosyltransferase 4 (FUT4) from Arabidopsis thaliana (Mouse-ear cress).